A 447-amino-acid chain; its full sequence is Phosphoglucosamine mutase (447 aa).

Residue Ser100 is the Phosphoserine intermediate of the active site. The Mg(2+) site is built by Ser100, Asp240, Asp242, and Asp244. At Ser100 the chain carries Phosphoserine.

Belongs to the phosphohexose mutase family. Mg(2+) serves as cofactor. Post-translationally, activated by phosphorylation.

It catalyses the reaction alpha-D-glucosamine 1-phosphate = D-glucosamine 6-phosphate. In terms of biological role, catalyzes the conversion of glucosamine-6-phosphate to glucosamine-1-phosphate. This is Phosphoglucosamine mutase from Clostridium botulinum (strain Alaska E43 / Type E3).